Consider the following 481-residue polypeptide: Squalene epoxidase erg1 (481 aa).

The chain crosses the membrane as a helical span at residues 28 to 48; that stretch reads HADVVIIGAGVLGCALAVALG. FAD is bound by residues 38-39, 58-59, Arg-66, and Arg-138; these read VL and EA. Asn-146 carries N-linked (GlcNAc...) asparagine glycosylation. 2 residues coordinate FAD: Asp-319 and Met-332. Transmembrane regions (helical) follow at residues 425 to 445 and 452 to 472; these read KPSVLFVHFFSVALLSLWVLL and LFPVALFKCIMTFWTACVVIF.

The protein belongs to the squalene monooxygenase family. It depends on FAD as a cofactor.

It localises to the endoplasmic reticulum membrane. The protein resides in the microsome membrane. It catalyses the reaction squalene + reduced [NADPH--hemoprotein reductase] + O2 = (S)-2,3-epoxysqualene + oxidized [NADPH--hemoprotein reductase] + H2O + H(+). It functions in the pathway steroid metabolism; ergosterol biosynthesis. Squalene epoxidase; part of the third module of ergosterol biosynthesis pathway that includes the late steps of the pathway. Erg1 catalyzes the epoxidation of squalene into 2,3-epoxysqualene. The third module or late pathway involves the ergosterol synthesis itself through consecutive reactions that mainly occur in the endoplasmic reticulum (ER) membrane. Firstly, the squalene synthase erg9 catalyzes the condensation of 2 farnesyl pyrophosphate moieties to form squalene, which is the precursor of all steroids. Squalene synthase is crucial for balancing the incorporation of farnesyl diphosphate (FPP) into sterol and nonsterol isoprene synthesis. Secondly, squalene is converted into lanosterol by the consecutive action of the squalene epoxidase erg1 and the lanosterol synthase erg7. Then, the delta(24)-sterol C-methyltransferase erg6 methylates lanosterol at C-24 to produce eburicol. Eburicol is the substrate of the sterol 14-alpha demethylase encoded by cyp51A and cyp51B, to yield 4,4,24-trimethyl ergosta-8,14,24(28)-trienol. The C-14 reductase erg24 then reduces the C14=C15 double bond which leads to 4,4-dimethylfecosterol. A sequence of further demethylations at C-4, involving the C-4 demethylation complex containing the C-4 methylsterol oxidases erg25A or erg25B, the sterol-4-alpha-carboxylate 3-dehydrogenase erg26 and the 3-keto-steroid reductase erg27, leads to the production of fecosterol via 4-methylfecosterol. The C-8 sterol isomerase erg2 then catalyzes the reaction which results in unsaturation at C-7 in the B ring of sterols and thus converts fecosterol to episterol. The sterol-C5-desaturase erg3B then catalyzes the introduction of a C-5 double bond in the B ring to produce 5-dehydroepisterol. The 2 other sterol-C5-desaturases, erg3A and erg3C, seem to be less important in ergosterol biosynthesis. The C-22 sterol desaturase erg5 further converts 5-dehydroepisterol into ergosta-5,7,22,24(28)-tetraen-3beta-ol by forming the C-22(23) double bond in the sterol side chain. Finally, ergosta-5,7,22,24(28)-tetraen-3beta-ol is substrate of the C-24(28) sterol reductases erg4A and erg4B to produce ergosterol. Possible alternative sterol biosynthetic pathways might exist from fecosterol to ergosterol, depending on the activities of the erg3 isoforms. The chain is Squalene epoxidase erg1 from Aspergillus fumigatus (strain ATCC MYA-4609 / CBS 101355 / FGSC A1100 / Af293) (Neosartorya fumigata).